Consider the following 236-residue polypeptide: MKIGIIGAMEPEVAHLIAAMTNATSQTIAGIEFIAGTLAGKDVVVTRSGIGKVAASIATTLLIEKYAPDAVINTGSAGGFVDTLAIGDIVISSEVRHHDVDVTAFGYEIGQMAQQPAAFVPAAHLVEAANKAIAQLGEVKAIEGLICTGDSFICDPIRTQAMLKNFPTMAACEMEGAAIAQVCHQFGVPFVVIRSLSDNANNDSPVDFDSYIVKAGYHSALMVMLLLEQLNPSAIK.

Residue E12 is the Proton acceptor of the active site. Residues G78, I153, and 174 to 175 (ME) contribute to the substrate site. Residue D198 is the Proton donor of the active site.

This sequence belongs to the PNP/UDP phosphorylase family. MtnN subfamily.

The enzyme catalyses S-adenosyl-L-homocysteine + H2O = S-(5-deoxy-D-ribos-5-yl)-L-homocysteine + adenine. It carries out the reaction S-methyl-5'-thioadenosine + H2O = 5-(methylsulfanyl)-D-ribose + adenine. The catalysed reaction is 5'-deoxyadenosine + H2O = 5-deoxy-D-ribose + adenine. It functions in the pathway amino-acid biosynthesis; L-methionine biosynthesis via salvage pathway; S-methyl-5-thio-alpha-D-ribose 1-phosphate from S-methyl-5'-thioadenosine (hydrolase route): step 1/2. Catalyzes the irreversible cleavage of the glycosidic bond in both 5'-methylthioadenosine (MTA) and S-adenosylhomocysteine (SAH/AdoHcy) to adenine and the corresponding thioribose, 5'-methylthioribose and S-ribosylhomocysteine, respectively. Also cleaves 5'-deoxyadenosine, a toxic by-product of radical S-adenosylmethionine (SAM) enzymes, into 5-deoxyribose and adenine. This Shewanella baltica (strain OS185) protein is 5'-methylthioadenosine/S-adenosylhomocysteine nucleosidase.